A 228-amino-acid polypeptide reads, in one-letter code: Flavin-dependent thymidylate synthase (228 aa).

Residues 1–217 (MEYKILDKGF…PWTFEAFLKF (217 aa)) enclose the ThyX domain. FAD contacts are provided by residues T55, 78–80 (RHR), and E86. DUMP-binding positions include 75–78 (QWFR), 86–90 (EASLR), and R156. The ThyX motif signature appears at 78–88 (RHRIGSFNEAS). Residues 172 to 174 (NAR) and N178 contribute to the FAD site. A dUMP-binding site is contributed by R183. The active-site Involved in ionization of N3 of dUMP, leading to its activation is R183.

It belongs to the thymidylate synthase ThyX family. Homotetramer. It depends on FAD as a cofactor.

It carries out the reaction dUMP + (6R)-5,10-methylene-5,6,7,8-tetrahydrofolate + NADPH + H(+) = dTMP + (6S)-5,6,7,8-tetrahydrofolate + NADP(+). The protein operates within pyrimidine metabolism; dTTP biosynthesis. In terms of biological role, catalyzes the reductive methylation of 2'-deoxyuridine-5'-monophosphate (dUMP) to 2'-deoxythymidine-5'-monophosphate (dTMP) while utilizing 5,10-methylenetetrahydrofolate (mTHF) as the methyl donor, and NADPH and FADH(2) as the reductant. This Thermosipho africanus (strain TCF52B) protein is Flavin-dependent thymidylate synthase.